A 110-amino-acid chain; its full sequence is Iron-sulfur cluster assembly protein CyaY (110 aa).

The protein belongs to the frataxin family.

Functionally, involved in iron-sulfur (Fe-S) cluster assembly. May act as a regulator of Fe-S biogenesis. The chain is Iron-sulfur cluster assembly protein CyaY from Ectopseudomonas mendocina (strain ymp) (Pseudomonas mendocina).